Reading from the N-terminus, the 416-residue chain is Nonsense-mediated decay protein 4 (416 aa).

Disordered stretches follow at residues 1-21, 195-218, and 356-393; these read MSLYPYNSDEDEARKNSNYHD, QHPIPQGESLESHNSFDETNYNNS, and DRPSKSKNKNKNKNTKKSTKPKQINGVVSDGCTGANGD. The segment covering 12–21 has biased composition (basic and acidic residues); that stretch reads EARKNSNYHD. Residues 360-375 are compositionally biased toward basic residues; it reads KSKNKNKNKNTKKSTK.

Its subcellular location is the cytoplasm. Its function is as follows. Involved in nonsense-mediated decay of mRNAs containing premature stop codons. This is Nonsense-mediated decay protein 4 (NMD4) from Debaryomyces hansenii (strain ATCC 36239 / CBS 767 / BCRC 21394 / JCM 1990 / NBRC 0083 / IGC 2968) (Yeast).